The following is a 320-amino-acid chain: Nicotianamine synthase 3 (320 aa).

It belongs to the nicotianamine synthase (NAS)-like family. In terms of tissue distribution, in shoots.

The enzyme catalyses 3 S-adenosyl-L-methionine = nicotianamine + 3 S-methyl-5'-thioadenosine + 3 H(+). Synthesizes nicotianamine, a polyamine which serves as a sensor for the physiological iron status within the plant, and/or might be involved in the transport of iron. The polypeptide is Nicotianamine synthase 3 (NAS3) (Arabidopsis thaliana (Mouse-ear cress)).